Reading from the N-terminus, the 643-residue chain is 1-deoxy-D-xylulose-5-phosphate synthase (643 aa).

Thiamine diphosphate-binding positions include His-72 and Gly-113 to Ala-115. Asp-144 provides a ligand contact to Mg(2+). Thiamine diphosphate contacts are provided by residues Gly-145 to Ala-146, Asn-174, Tyr-287, and Glu-370. A Mg(2+)-binding site is contributed by Asn-174.

It belongs to the transketolase family. DXPS subfamily. Homodimer. Mg(2+) is required as a cofactor. Thiamine diphosphate serves as cofactor.

It catalyses the reaction D-glyceraldehyde 3-phosphate + pyruvate + H(+) = 1-deoxy-D-xylulose 5-phosphate + CO2. It participates in metabolic intermediate biosynthesis; 1-deoxy-D-xylulose 5-phosphate biosynthesis; 1-deoxy-D-xylulose 5-phosphate from D-glyceraldehyde 3-phosphate and pyruvate: step 1/1. Its function is as follows. Catalyzes the acyloin condensation reaction between C atoms 2 and 3 of pyruvate and glyceraldehyde 3-phosphate to yield 1-deoxy-D-xylulose-5-phosphate (DXP). The protein is 1-deoxy-D-xylulose-5-phosphate synthase of Parasynechococcus marenigrum (strain WH8102).